The primary structure comprises 141 residues: Nucleoside diphosphate kinase (141 aa).

The ATP site is built by K11, F59, R87, T93, R104, and N114. The active-site Pros-phosphohistidine intermediate is the H117.

Belongs to the NDK family. Homotetramer. Mg(2+) is required as a cofactor.

The protein resides in the cytoplasm. The enzyme catalyses a 2'-deoxyribonucleoside 5'-diphosphate + ATP = a 2'-deoxyribonucleoside 5'-triphosphate + ADP. The catalysed reaction is a ribonucleoside 5'-diphosphate + ATP = a ribonucleoside 5'-triphosphate + ADP. Functionally, major role in the synthesis of nucleoside triphosphates other than ATP. The ATP gamma phosphate is transferred to the NDP beta phosphate via a ping-pong mechanism, using a phosphorylated active-site intermediate. In Methylibium petroleiphilum (strain ATCC BAA-1232 / LMG 22953 / PM1), this protein is Nucleoside diphosphate kinase.